A 220-amino-acid polypeptide reads, in one-letter code: MELYLDTSDVAAVKKLARIFPLAGVTTNPSIVAAGKKPLDVLLPELHDALGGKGQLFAQVMATSAEAMVEDARKLRAIINDLVVKVPVTAEGLAAIKILKAEGIPTLGTAVYGAAQGMLSALAGAEYVAPYVNRLDAQGGDGIQTVVELQQLLTLHAPQAKVLAASFKTPRQALNCLLAGCEAITLPLDVAQQFISAPAVDAAVAKFEQDWQSAFGRTSI.

Catalysis depends on Lys85, which acts as the Schiff-base intermediate with substrate.

It belongs to the transaldolase family. Type 3A subfamily. Homodecamer.

It is found in the cytoplasm. It carries out the reaction beta-D-fructose 6-phosphate = dihydroxyacetone + D-glyceraldehyde 3-phosphate. Catalyzes the reversible formation of fructose 6-phosphate from dihydroxyacetone and D-glyceraldehyde 3-phosphate via an aldolization reaction. The sequence is that of Fructose-6-phosphate aldolase from Enterobacter sp. (strain 638).